The sequence spans 134 residues: Large ribosomal subunit protein uL14 (134 aa).

This sequence belongs to the universal ribosomal protein uL14 family. As to quaternary structure, part of the 50S ribosomal subunit. Forms a cluster with proteins L3 and L19. In the 70S ribosome, L14 and L19 interact and together make contacts with the 16S rRNA in bridges B5 and B8.

Its function is as follows. Binds to 23S rRNA. Forms part of two intersubunit bridges in the 70S ribosome. The protein is Large ribosomal subunit protein uL14 of Deinococcus deserti (strain DSM 17065 / CIP 109153 / LMG 22923 / VCD115).